The following is a 469-amino-acid chain: Tryptophan biosynthesis protein TrpCF (469 aa).

Positions 1 to 257 are indole-3-glycerol phosphate synthase; sequence MNSILKEIIN…EAVCKMILGN (257 aa). Positions 258–469 are N-(5'-phosphoribosyl)anthranilate isomerase; that stretch reads NKICGLTQSS…YRNLICLGKK (212 aa).

The protein in the N-terminal section; belongs to the TrpC family. In the C-terminal section; belongs to the TrpF family. Monomer.

It carries out the reaction N-(5-phospho-beta-D-ribosyl)anthranilate = 1-(2-carboxyphenylamino)-1-deoxy-D-ribulose 5-phosphate. The catalysed reaction is 1-(2-carboxyphenylamino)-1-deoxy-D-ribulose 5-phosphate + H(+) = (1S,2R)-1-C-(indol-3-yl)glycerol 3-phosphate + CO2 + H2O. It functions in the pathway amino-acid biosynthesis; L-tryptophan biosynthesis; L-tryptophan from chorismate: step 3/5. It participates in amino-acid biosynthesis; L-tryptophan biosynthesis; L-tryptophan from chorismate: step 4/5. Functionally, bifunctional enzyme that catalyzes two sequential steps of tryptophan biosynthetic pathway. The first reaction is catalyzed by the isomerase, coded by the TrpF domain; the second reaction is catalyzed by the synthase, coded by the TrpC domain. In Buchnera aphidicola subsp. Baizongia pistaciae (strain Bp), this protein is Tryptophan biosynthesis protein TrpCF (trpC).